A 489-amino-acid chain; its full sequence is MQFHSDKQHLDSKTDIDFKPNSPRSLQNRNTKNLSLDIAALHPLMEFSSPSQDVPGSVKFPSPTPLNLFMKPKPIVLEKCPPKVSPRPTPPSLSMRRSEASIYTLPTSLKNRTVSPSVYTKSSTVSSISKLSSSSPLSSFSEKPHLNRVHSLSVKTKDLKLKGIRGRSQTISGLETSTPISSTREGTLDSTDVNRFSNQKNMQTTLIFPEEDSDLNIDMVHAEIYQRTVYLDGPLLVLPPNLYLYSEPKLEDILSFDLVINVAKEIPNLEFLIPPEMAHKIKYYHIEWTHTSKIVKDLSRLTRIIHTAHSQGKKILVHCQCGVSRSASLIVAYIMRYYGLSLNDAYNKLKGVAKDISPNMGLIFQLMEWGTMLSKNSPGEEGETVHMPEEDDIGNNEVSSTTKSYSSASFRSFPMVTNLSSSPNDSSVNSSEVTPRTPATLTGARTALATERGEDDEHCKSLSQPADSLEASVDNESISTAPEQMMFLP.

The segment covering 1-18 (MQFHSDKQHLDSKTDIDF) has biased composition (basic and acidic residues). Residues 1-30 (MQFHSDKQHLDSKTDIDFKPNSPRSLQNRN) form a disordered region. Residues Ser22, Ser98, and Ser151 each carry the phosphoserine modification. Residue Thr178 is modified to Phosphothreonine. A Tyrosine-protein phosphatase domain is found at 233–375 (GPLLVLPPNL…LMEWGTMLSK (143 aa)). Catalysis depends on Cys319, which acts as the Phosphocysteine intermediate. Disordered stretches follow at residues 375-401 (KNSPGEEGETVHMPEEDDIGNNEVSST) and 419-489 (LSSS…MFLP). Residues 419–450 (LSSSPNDSSVNSSEVTPRTPATLTGARTALAT) show a composition bias toward low complexity. Positions 451 to 460 (ERGEDDEHCK) are enriched in basic and acidic residues.

This sequence belongs to the protein-tyrosine phosphatase family. Non-receptor class dual specificity subfamily.

It carries out the reaction O-phospho-L-tyrosyl-[protein] + H2O = L-tyrosyl-[protein] + phosphate. In terms of biological role, dual specificity phosphatase that dephosphorylates MAP kinase FUS3 on both a Tyr and a Ser or Thr. Has a role in adaptation to pheromone. The polypeptide is Tyrosine-protein phosphatase MSG5 (MSG5) (Saccharomyces cerevisiae (strain ATCC 204508 / S288c) (Baker's yeast)).